Here is a 504-residue protein sequence, read N- to C-terminus: Maturase K (504 aa).

This sequence belongs to the intron maturase 2 family. MatK subfamily.

The protein resides in the plastid. It is found in the chloroplast. Functionally, usually encoded in the trnK tRNA gene intron. Probably assists in splicing its own and other chloroplast group II introns. In Pentaplaris doroteae, this protein is Maturase K.